A 347-amino-acid chain; its full sequence is KRR1 small subunit processome component homolog (347 aa).

The KH domain occupies Gly124–Asn194. Residues Asn231 to Lys246 are compositionally biased toward basic residues. Positions Asn231–Ser347 are disordered. A coiled-coil region spans residues Phe271 to Phe304. 2 stretches are compositionally biased toward basic and acidic residues: residues Leu272 to Asp303 and Lys318 to Val329. Residues Lys337–Ser347 show a composition bias toward basic residues.

This sequence belongs to the KRR1 family. In terms of assembly, monomer. Component of the ribosomal small subunit (SSU) processome.

It localises to the nucleus. The protein resides in the nucleolus. Its function is as follows. Required for 40S ribosome biogenesis. Involved in nucleolar processing of pre-18S ribosomal RNA and ribosome assembly. Binds to RNA. Required for female germline development, cell viability during eye development and for survival of dividing cells and epithelial cells during early wing disk development. This is KRR1 small subunit processome component homolog from Drosophila willistoni (Fruit fly).